Consider the following 258-residue polypeptide: MYTTGLIGKNINYSESPEIHNNYYKKNNIPFFYKIFNLKQDQIDDFIKNLHKNNIKGFNVTIPYKETILQYLNDIVYPADKIGAVNTVAVQEDKLIGYNTDYIGFIKSLQYYNIQVKNFKCLIIGSGGSAKCIYYALKELNARDICIVSRNPEKARLKFEKKVKILNIKDENKLDRYDLIVNCTPIGGPNFKEQKPIELKEIKKNCVVYDLNYTPKRSKLLKEAKENGAFIINGEKMLIFQAYSAIGLWCLNGIKGGR.

Shikimate is bound by residues 14–16 and threonine 61; that span reads SES. Residue lysine 65 is the Proton acceptor of the active site. Asparagine 86 and aspartate 101 together coordinate shikimate. Residues 125 to 129 and leucine 211 each bind NADP(+); that span reads GSGGS. Tyrosine 213 serves as a coordination point for shikimate. Position 234 (glycine 234) interacts with NADP(+).

It belongs to the shikimate dehydrogenase family. As to quaternary structure, homodimer.

The catalysed reaction is shikimate + NADP(+) = 3-dehydroshikimate + NADPH + H(+). It functions in the pathway metabolic intermediate biosynthesis; chorismate biosynthesis; chorismate from D-erythrose 4-phosphate and phosphoenolpyruvate: step 4/7. In terms of biological role, involved in the biosynthesis of the chorismate, which leads to the biosynthesis of aromatic amino acids. Catalyzes the reversible NADPH linked reduction of 3-dehydroshikimate (DHSA) to yield shikimate (SA). In Clostridium botulinum (strain 657 / Type Ba4), this protein is Shikimate dehydrogenase (NADP(+)).